The primary structure comprises 783 residues: Protein phosphatase 2C 29 (783 aa).

Residues 151 to 194 (SFSALPLQPGPDRSGLFMSGPIERGATSGPLDPPAGEISRSNSA) are disordered. Residue Ser199 is modified to Phosphoserine. Positions 260 to 770 (SSGENDLQWA…DDCTVLVIAL (511 aa)) constitute a PPM-type phosphatase domain. Mn(2+)-binding residues include Asp295 and Gly296. Positions 555 to 595 (ETGESVETAERVEERRNDLDRDDGNKEPLVVDSSDSTVNNE) are disordered. Basic and acidic residues predominate over residues 562–580 (TAERVEERRNDLDRDDGNK). The Mn(2+) site is built by Asp701 and Asp761.

Belongs to the PP2C family. Mg(2+) is required as a cofactor. Requires Mn(2+) as cofactor. As to expression, expressed in roots, leaves, stems, inflorescences, flowers and developing vascular tissue.

It localises to the nucleus. It catalyses the reaction O-phospho-L-seryl-[protein] + H2O = L-seryl-[protein] + phosphate. The enzyme catalyses O-phospho-L-threonyl-[protein] + H2O = L-threonyl-[protein] + phosphate. In terms of biological role, involved in the regulation of pedicel length and of CLAVATA pathways controlling stem cell identity at shoot and flower meristems. The protein is Protein phosphatase 2C 29 (PLL1) of Arabidopsis thaliana (Mouse-ear cress).